Consider the following 194-residue polypeptide: MTVGVDEVGRGCLFGPVFAAAVSLTGAADAELTALGLTDSKALSAKRRADLVPHIQAKASAWALGQGSAREIDAHGIRVATELAMLRALQKLPIQPELVLVDGVLPLRLWPGAQRTIVRGDSQEASIAAASVLAKVARDGLMCRLAERFPEYGFERHAGYGTALHRQALITSGPTALHRKSFLTRLFPRDDGLR.

Positions 1–194 constitute an RNase H type-2 domain; sequence MTVGVDEVGR…RLFPRDDGLR (194 aa). Residues Asp6, Glu7, and Asp102 each contribute to the a divalent metal cation site.

It belongs to the RNase HII family. Mn(2+) is required as a cofactor. It depends on Mg(2+) as a cofactor.

Its subcellular location is the cytoplasm. The catalysed reaction is Endonucleolytic cleavage to 5'-phosphomonoester.. In terms of biological role, endonuclease that specifically degrades the RNA of RNA-DNA hybrids. The sequence is that of Ribonuclease HII from Synechococcus sp. (strain WH7803).